We begin with the raw amino-acid sequence, 617 residues long: Probable translation initiation factor IF-2 (617 aa).

The 218-residue stretch at 14-231 folds into the tr-type G domain; that stretch reads LRQPIVVVLG…VLAGLTQTYL (218 aa). Residues 23 to 30 form a G1 region; it reads GHVDHGKT. 23 to 30 contributes to the GTP binding site; it reads GHVDHGKT. A G2 region spans residues 48 to 52; the sequence is GITQH. The tract at residues 87–90 is G3; sequence DTPG. Residues 87–91 and 141–144 contribute to the GTP site; these read DTPGH and NKID. A G4 region spans residues 141–144; the sequence is NKID. The interval 209 to 211 is G5; sequence SAR.

It belongs to the TRAFAC class translation factor GTPase superfamily. Classic translation factor GTPase family. IF-2 subfamily.

In terms of biological role, function in general translation initiation by promoting the binding of the formylmethionine-tRNA to ribosomes. Seems to function along with eIF-2. This Aeropyrum pernix (strain ATCC 700893 / DSM 11879 / JCM 9820 / NBRC 100138 / K1) protein is Probable translation initiation factor IF-2 (infB).